A 290-amino-acid chain; its full sequence is Carbonic anhydrase-related protein (290 aa).

Residues 1-26 (MADLSFIEDTVAFPEKEEDEEEEEEG) form a disordered region. At Ser-5 the chain carries Phosphoserine. Residues 16–26 (KEEDEEEEEEG) are compositionally biased toward acidic residues. One can recognise an Alpha-carbonic anhydrase domain in the interval 27–289 (VEWGYEEGVE…LSDRVIRAAF (263 aa)). His-87 acts as the Proton donor/acceptor in catalysis. His-118 and His-141 together coordinate Zn(2+).

Belongs to the alpha-carbonic anhydrase family.

Functionally, does not have a carbonic anhydrase catalytic activity. This is Carbonic anhydrase-related protein (CA8) from Homo sapiens (Human).